Reading from the N-terminus, the 142-residue chain is Hemoglobin subunit beta-C (142 aa).

Positions 2–142 constitute a Globin domain; sequence PNKALITGFW…VASALAHRYH (141 aa). Positions 59 and 88 each coordinate heme b.

It belongs to the globin family. As to quaternary structure, heterotetramer of two alpha chains and two beta chains. In terms of tissue distribution, red blood cells.

Functionally, involved in oxygen transport from the lung to the various peripheral tissues. In Ovis aries (Sheep), this protein is Hemoglobin subunit beta-C (HBBC).